A 194-amino-acid polypeptide reads, in one-letter code: Molybdenum cofactor guanylyltransferase (194 aa).

GTP contacts are provided by residues 12–14, lysine 25, asparagine 53, aspartate 71, and aspartate 101; that span reads LAG. Position 101 (aspartate 101) interacts with Mg(2+).

Belongs to the MobA family. In terms of assembly, monomer. Mg(2+) serves as cofactor.

The protein localises to the cytoplasm. It catalyses the reaction Mo-molybdopterin + GTP + H(+) = Mo-molybdopterin guanine dinucleotide + diphosphate. Its function is as follows. Transfers a GMP moiety from GTP to Mo-molybdopterin (Mo-MPT) cofactor (Moco or molybdenum cofactor) to form Mo-molybdopterin guanine dinucleotide (Mo-MGD) cofactor. This chain is Molybdenum cofactor guanylyltransferase, found in Escherichia coli O157:H7.